A 356-amino-acid polypeptide reads, in one-letter code: Galectin-9C (356 aa).

The Galectin 1 domain occupies 17 to 148; it reads FSGTIQGGLQ…SVQLSYISFQ (132 aa). 82–88 contacts a beta-D-galactoside; it reads WGPEERK. The interval 170–190 is disordered; it reads FPPRPRGRRQKPPSVRPANPA. The Galectin 2 domain maps to 228–356; the sequence is FITTIPGGLY…GDIQLTHVQT (129 aa). 288–294 lines the a beta-D-galactoside pocket; that stretch reads WGSEERS.

Binds galactosides. This chain is Galectin-9C (LGALS9C), found in Homo sapiens (Human).